A 996-amino-acid polypeptide reads, in one-letter code: UPF0182 protein CE0802 (996 aa).

The next 7 membrane-spanning stretches (helical) occupy residues 19–39 (VTWIIGIIALLVLVTPLTVGF), 63–83 (IILFIVFALLAGFVTWLAGYF), 115–135 (ILIIVPIFVGLLGGLVGQRSW), 176–196 (STLLVVAFIIALVGHYLLGGI), 212–234 (GARAQLAVTAGLWMLVRVATYWL), 262–282 (KIILMVISIIVAVAFFSAIFL), and 290–310 (LAVVLLVLSSVVVGAVWPLML). The segment at 920-950 (VPDVNATEDADATTDGEDETPAAPAAPAGSE) is disordered. Residues 925–939 (ATEDADATTDGEDET) are compositionally biased toward acidic residues. Residues 940–950 (PAAPAAPAGSE) show a composition bias toward low complexity.

It belongs to the UPF0182 family.

It localises to the cell membrane. The protein is UPF0182 protein CE0802 of Corynebacterium efficiens (strain DSM 44549 / YS-314 / AJ 12310 / JCM 11189 / NBRC 100395).